The sequence spans 212 residues: MADQEIENAVSRALEDAPERNFRETVDLAVNLRDLDLNDPSNRVDESVVLPAGTGQETTIVVFAEGETALRAEEVADDVLDEDELEELGGDDDAAKDLADDTDFFIAEKGLMQDIGRYLGTVLGPRGKMPEPLDPDDDVVEVIERMKNTVQLRSGERRTFHTRVGAEDMSAENIADNIDVILRRLHADLEKGPLNIDTVYVKTTMGPAMEVA.

The protein belongs to the universal ribosomal protein uL1 family. In terms of assembly, part of the 50S ribosomal subunit.

In terms of biological role, binds directly to 23S rRNA. Probably involved in E site tRNA release. Its function is as follows. Protein L1 is also a translational repressor protein, it controls the translation of its operon by binding to its mRNA. The polypeptide is Large ribosomal subunit protein uL1 (Haloarcula marismortui (strain ATCC 43049 / DSM 3752 / JCM 8966 / VKM B-1809) (Halobacterium marismortui)).